We begin with the raw amino-acid sequence, 500 residues long: Probable cytosol aminopeptidase (500 aa).

Residues Lys-264 and Asp-269 each contribute to the Mn(2+) site. Residue Lys-276 is part of the active site. 3 residues coordinate Mn(2+): Asp-287, Asp-346, and Glu-348. The active site involves Arg-350.

Belongs to the peptidase M17 family. The cofactor is Mn(2+).

Its subcellular location is the cytoplasm. The catalysed reaction is Release of an N-terminal amino acid, Xaa-|-Yaa-, in which Xaa is preferably Leu, but may be other amino acids including Pro although not Arg or Lys, and Yaa may be Pro. Amino acid amides and methyl esters are also readily hydrolyzed, but rates on arylamides are exceedingly low.. The enzyme catalyses Release of an N-terminal amino acid, preferentially leucine, but not glutamic or aspartic acids.. Presumably involved in the processing and regular turnover of intracellular proteins. Catalyzes the removal of unsubstituted N-terminal amino acids from various peptides. The sequence is that of Probable cytosol aminopeptidase from Chlamydia felis (strain Fe/C-56) (Chlamydophila felis).